The chain runs to 505 residues: Maturase K (505 aa).

This sequence belongs to the intron maturase 2 family. MatK subfamily.

The protein resides in the plastid. It is found in the chloroplast. Usually encoded in the trnK tRNA gene intron. Probably assists in splicing its own and other chloroplast group II introns. In Barclaya longifolia (Orchid lily), this protein is Maturase K.